The following is a 305-amino-acid chain: GTP cyclohydrolase FolE2 (305 aa).

This sequence belongs to the GTP cyclohydrolase IV family.

The catalysed reaction is GTP + H2O = 7,8-dihydroneopterin 3'-triphosphate + formate + H(+). It functions in the pathway cofactor biosynthesis; 7,8-dihydroneopterin triphosphate biosynthesis; 7,8-dihydroneopterin triphosphate from GTP: step 1/1. Converts GTP to 7,8-dihydroneopterin triphosphate. In Xanthomonas axonopodis pv. citri (strain 306), this protein is GTP cyclohydrolase FolE2.